A 305-amino-acid chain; its full sequence is Porphobilinogen deaminase (305 aa).

S-(dipyrrolylmethanemethyl)cysteine is present on C243.

This sequence belongs to the HMBS family. In terms of assembly, monomer. It depends on dipyrromethane as a cofactor.

The catalysed reaction is 4 porphobilinogen + H2O = hydroxymethylbilane + 4 NH4(+). It participates in porphyrin-containing compound metabolism; protoporphyrin-IX biosynthesis; coproporphyrinogen-III from 5-aminolevulinate: step 2/4. Its function is as follows. Tetrapolymerization of the monopyrrole PBG into the hydroxymethylbilane pre-uroporphyrinogen in several discrete steps. This Limosilactobacillus reuteri (strain DSM 20016) (Lactobacillus reuteri) protein is Porphobilinogen deaminase.